The following is a 411-amino-acid chain: Putative glycosyltransferase SCO3672 (411 aa).

10 helical membrane-spanning segments follow: residues 7–27 (IAAATVTATASFLLTAVLAAL), 45–65 (PVPLLGGVAVVLVTAVVAWAG), 70–90 (VVPLGPAAGRLLAAATVVGAL), 120–140 (ETGPVAGALAVGWVALVTGAF), 148–168 (GVVGTVGVVTAFGVGACAAVE), 169–189 (LMDGPAVLLLVLAAALAGFLL), 197–217 (IALGACGSLFTGFLLTGAAVL), 227–247 (GAGVLCALTAVPVADAVLVLL), 277–297 (GVVVVLGGAALCAVVVGVLAH), and 301–321 (VGGQAALWVAGGAAAGVLGLL).

It belongs to the glycosyltransferase 4 family.

The protein localises to the cell membrane. In Streptomyces coelicolor (strain ATCC BAA-471 / A3(2) / M145), this protein is Putative glycosyltransferase SCO3672.